Consider the following 174-residue polypeptide: 16S rRNA aminocarboxypropyltransferase (174 aa).

Residues T26, L73, L97, and S116 each contribute to the S-adenosyl-L-methionine site.

It belongs to the TDD superfamily. TSR3 family.

The protein localises to the cytoplasm. It carries out the reaction an N(1)-methylpseudouridine in rRNA + S-adenosyl-L-methionine = N(1)-methyl-N(3)-[(3S)-3-amino-3-carboxypropyl]pseudouridine in rRNA + S-methyl-5'-thioadenosine + H(+). Aminocarboxypropyltransferase that catalyzes the aminocarboxypropyl transfer on pseudouridine corresponding to position 914 in M.jannaschii 16S rRNA. It constitutes the last step in biosynthesis of the hypermodified N1-methyl-N3-(3-amino-3-carboxypropyl) pseudouridine (m1acp3-Psi). This chain is 16S rRNA aminocarboxypropyltransferase, found in Methanosarcina acetivorans (strain ATCC 35395 / DSM 2834 / JCM 12185 / C2A).